A 90-amino-acid chain; its full sequence is Acylphosphatase (90 aa).

The 88-residue stretch at 3–90 (QYRIIVDGRV…DGFQKFNISY (88 aa)) folds into the Acylphosphatase-like domain. Active-site residues include Arg18 and Asn36.

It belongs to the acylphosphatase family.

The catalysed reaction is an acyl phosphate + H2O = a carboxylate + phosphate + H(+). This Bacillus licheniformis (strain ATCC 14580 / DSM 13 / JCM 2505 / CCUG 7422 / NBRC 12200 / NCIMB 9375 / NCTC 10341 / NRRL NRS-1264 / Gibson 46) protein is Acylphosphatase (acyP).